The primary structure comprises 217 residues: Probable D-methionine transport system permease protein MetI (217 aa).

The region spanning 13-207 (TLETLYMGFI…LIVMLSQKLG (195 aa)) is the ABC transmembrane type-1 domain. 5 helical membrane-spanning segments follow: residues 20–40 (GFIA…LAFL), 58–78 (VIIN…LLPF), 81–101 (LVVG…VSAI), 143–163 (IPIL…YSAM), and 184–204 (NMIY…MLSQ).

It belongs to the binding-protein-dependent transport system permease family. CysTW subfamily.

The protein resides in the cell inner membrane. Its function is as follows. Part of the binding-protein-dependent transport system for D-methionine. Probably responsible for the translocation of the substrate across the membrane. This is Probable D-methionine transport system permease protein MetI (metI) from Pasteurella multocida (strain Pm70).